Reading from the N-terminus, the 367-residue chain is Probable thylakoidal processing peptidase 2, chloroplastic (367 aa).

Residues 1 to 68 (MAIRVTFTYS…NTWGPSSGPR (68 aa)) constitute a chloroplast transit peptide. A disordered region spans residues 53-72 (DKSPGSNTWGPSSGPRARPA). The segment covering 62-72 (GPSSGPRARPA) has biased composition (low complexity). A helical membrane pass occupies residues 185–205 (EDAKAAFTAVTVSLLFRSALA). The Lumenal, thylakoid segment spans residues 206 to 367 (EPKSIPSTSM…VSQKRAVDVS (162 aa)). The active site involves Ser214.

Belongs to the peptidase S26 family.

It localises to the plastid. It is found in the chloroplast thylakoid membrane. It carries out the reaction Cleavage of hydrophobic, N-terminal signal or leader sequences from secreted and periplasmic proteins.. Functionally, cleaves the thylakoid-transfer domain from a chloroplast protein. This is Probable thylakoidal processing peptidase 2, chloroplastic (TPP2) from Arabidopsis thaliana (Mouse-ear cress).